The sequence spans 414 residues: Multifunctional CCA protein (414 aa).

ATP contacts are provided by G8 and R11. CTP is bound by residues G8 and R11. The Mg(2+) site is built by D21 and D23. ATP contacts are provided by R91, R143, and R146. Positions 91, 143, and 146 each coordinate CTP. One can recognise an HD domain in the interval 232 to 333 (TGVHVMMVID…TRLVERCDAL (102 aa)).

This sequence belongs to the tRNA nucleotidyltransferase/poly(A) polymerase family. Bacterial CCA-adding enzyme type 1 subfamily. In terms of assembly, monomer. Can also form homodimers and oligomers. It depends on Mg(2+) as a cofactor. Ni(2+) serves as cofactor.

The catalysed reaction is a tRNA precursor + 2 CTP + ATP = a tRNA with a 3' CCA end + 3 diphosphate. The enzyme catalyses a tRNA with a 3' CCA end + 2 CTP + ATP = a tRNA with a 3' CCACCA end + 3 diphosphate. In terms of biological role, catalyzes the addition and repair of the essential 3'-terminal CCA sequence in tRNAs without using a nucleic acid template. Adds these three nucleotides in the order of C, C, and A to the tRNA nucleotide-73, using CTP and ATP as substrates and producing inorganic pyrophosphate. tRNA 3'-terminal CCA addition is required both for tRNA processing and repair. Also involved in tRNA surveillance by mediating tandem CCA addition to generate a CCACCA at the 3' terminus of unstable tRNAs. While stable tRNAs receive only 3'-terminal CCA, unstable tRNAs are marked with CCACCA and rapidly degraded. This is Multifunctional CCA protein from Cupriavidus metallidurans (strain ATCC 43123 / DSM 2839 / NBRC 102507 / CH34) (Ralstonia metallidurans).